We begin with the raw amino-acid sequence, 768 residues long: Phosphoribosylformylglycinamidine synthase subunit PurL (768 aa).

The active site involves His53. Position 56 (Tyr56) interacts with ATP. A Mg(2+)-binding site is contributed by Glu98. Substrate is bound by residues 99 to 102 (SHNH) and Arg121. His100 functions as the Proton acceptor in the catalytic mechanism. Residue Asp122 participates in Mg(2+) binding. Gln253 is a substrate binding site. Asp285 serves as a coordination point for Mg(2+). 328-330 (ETQ) serves as a coordination point for substrate. ATP is bound by residues Asp516 and Gly561. Asn562 is a Mg(2+) binding site. Position 564 (Ser564) interacts with substrate.

The protein belongs to the FGAMS family. Monomer. Part of the FGAM synthase complex composed of 1 PurL, 1 PurQ and 2 PurS subunits.

The protein localises to the cytoplasm. The enzyme catalyses N(2)-formyl-N(1)-(5-phospho-beta-D-ribosyl)glycinamide + L-glutamine + ATP + H2O = 2-formamido-N(1)-(5-O-phospho-beta-D-ribosyl)acetamidine + L-glutamate + ADP + phosphate + H(+). The protein operates within purine metabolism; IMP biosynthesis via de novo pathway; 5-amino-1-(5-phospho-D-ribosyl)imidazole from N(2)-formyl-N(1)-(5-phospho-D-ribosyl)glycinamide: step 1/2. Part of the phosphoribosylformylglycinamidine synthase complex involved in the purines biosynthetic pathway. Catalyzes the ATP-dependent conversion of formylglycinamide ribonucleotide (FGAR) and glutamine to yield formylglycinamidine ribonucleotide (FGAM) and glutamate. The FGAM synthase complex is composed of three subunits. PurQ produces an ammonia molecule by converting glutamine to glutamate. PurL transfers the ammonia molecule to FGAR to form FGAM in an ATP-dependent manner. PurS interacts with PurQ and PurL and is thought to assist in the transfer of the ammonia molecule from PurQ to PurL. In Methanothrix thermoacetophila (strain DSM 6194 / JCM 14653 / NBRC 101360 / PT) (Methanosaeta thermophila), this protein is Phosphoribosylformylglycinamidine synthase subunit PurL.